Reading from the N-terminus, the 504-residue chain is Light-independent protochlorophyllide reductase subunit B (504 aa).

Residue D36 participates in [4Fe-4S] cluster binding. Residue D279 is the Proton donor of the active site. Residue 414-415 (GL) participates in substrate binding.

The protein belongs to the ChlB/BchB/BchZ family. In terms of assembly, protochlorophyllide reductase is composed of three subunits; BchL, BchN and BchB. Forms a heterotetramer of two BchB and two BchN subunits. [4Fe-4S] cluster is required as a cofactor.

The enzyme catalyses chlorophyllide a + oxidized 2[4Fe-4S]-[ferredoxin] + 2 ADP + 2 phosphate = protochlorophyllide a + reduced 2[4Fe-4S]-[ferredoxin] + 2 ATP + 2 H2O. It functions in the pathway porphyrin-containing compound metabolism; bacteriochlorophyll biosynthesis (light-independent). Its function is as follows. Component of the dark-operative protochlorophyllide reductase (DPOR) that uses Mg-ATP and reduced ferredoxin to reduce ring D of protochlorophyllide (Pchlide) to form chlorophyllide a (Chlide). This reaction is light-independent. The NB-protein (BchN-BchB) is the catalytic component of the complex. This chain is Light-independent protochlorophyllide reductase subunit B, found in Acidiphilium rubrum.